A 102-amino-acid polypeptide reads, in one-letter code: uncharacterized protein (102 aa).

The disordered stretch occupies residues 1-21 (MAESVNENNNNAGDSNGSGRT). N-linked (GlcNAc...) asparagine glycosylation occurs at asparagine 16. A helical transmembrane segment spans residues 24–44 (NTIVTIVVVVIVVTLIIILAT). The segment at 49–102 (IGGSGKKVGAEEPATKLSSKSDDRNGGPNKKSPAKGSSKDDNNTEESVQSNLYG) is disordered. The span at 56-73 (VGAEEPATKLSSKSDDRN) shows a compositional bias: basic and acidic residues. Asparagine 90 is a glycosylation site (N-linked (GlcNAc...) asparagine). Residues 93-102 (EESVQSNLYG) show a composition bias toward polar residues.

It is found in the membrane. This is an uncharacterized protein from Encephalitozoon cuniculi (strain GB-M1) (Microsporidian parasite).